Consider the following 142-residue polypeptide: Myosin-2 essential light chain (142 aa).

2 EF-hand domains span residues 2 to 37 (DDLA…LGQN) and 75 to 110 (HTVE…LGER).

In terms of assembly, myosin is a hexamer of 2 heavy chains and 4 light chains (two regulatory light chains and two essential light chains).

It is found in the cytoplasm. It localises to the cytoskeleton. Its function is as follows. Required for cytokinesis and embryo elongation. May regulate myosin II complex formation and/or the association of myosin with actin. May be involved in the organization of mlc-4 and nmy-2 into bundles. The sequence is that of Myosin-2 essential light chain from Caenorhabditis elegans.